Reading from the N-terminus, the 458-residue chain is Adenylosuccinate synthetase (458 aa).

Residues 17–23 (GDEGKGK) and 45–47 (GHT) each bind GTP. The Proton acceptor role is filled by aspartate 18. 2 residues coordinate Mg(2+): aspartate 18 and glycine 45. IMP contacts are provided by residues 18–21 (DEGK), 43–46 (NAGH), threonine 137, arginine 151, glutamine 247, threonine 262, and arginine 330. Histidine 46 (proton donor) is an active-site residue. A substrate-binding site is contributed by 326-332 (VTTGRSR). GTP contacts are provided by residues arginine 332, 358-360 (KLD), and 440-442 (STS).

This sequence belongs to the adenylosuccinate synthetase family. Homodimer. The cofactor is Mg(2+).

The protein localises to the cytoplasm. It catalyses the reaction IMP + L-aspartate + GTP = N(6)-(1,2-dicarboxyethyl)-AMP + GDP + phosphate + 2 H(+). It participates in purine metabolism; AMP biosynthesis via de novo pathway; AMP from IMP: step 1/2. Its function is as follows. Plays an important role in the de novo pathway of purine nucleotide biosynthesis. Catalyzes the first committed step in the biosynthesis of AMP from IMP. The chain is Adenylosuccinate synthetase from Verminephrobacter eiseniae (strain EF01-2).